A 438-amino-acid chain; its full sequence is Enolase 1 (438 aa).

2 residues coordinate substrate: histidine 160 and glutamate 169. Residue glutamate 212 is the Proton donor of the active site. Mg(2+)-binding residues include aspartate 247, glutamate 296, and aspartate 321. Substrate is bound by residues glutamate 296 and aspartate 321. Lysine 346 (proton acceptor) is an active-site residue. Residues 373-376 (SHRS) and lysine 397 each bind substrate.

Belongs to the enolase family. Homodimer. Requires Mg(2+) as cofactor.

The protein resides in the cytoplasm. It carries out the reaction (2R)-2-phosphoglycerate = phosphoenolpyruvate + H2O. It participates in carbohydrate degradation; glycolysis; pyruvate from D-glyceraldehyde 3-phosphate: step 4/5. The protein is Enolase 1 (ENO1) of Candida glabrata (strain ATCC 2001 / BCRC 20586 / JCM 3761 / NBRC 0622 / NRRL Y-65 / CBS 138) (Yeast).